Reading from the N-terminus, the 149-residue chain is Protein cornichon homolog 2 (149 aa).

Transmembrane regions (helical) follow at residues Ile-3–Ala-23, Ala-59–Val-79, and Tyr-117–Ile-137.

It belongs to the cornichon family.

The protein resides in the endoplasmic reticulum membrane. It is found in the golgi apparatus membrane. In terms of biological role, acts as a cargo receptor necessary for the transportation of secretory proteins from the endoplasmic reticulum (ER) in COPII-coated vesicles targeted to the Golgi apparatus. This Oryza sativa subsp. japonica (Rice) protein is Protein cornichon homolog 2.